The chain runs to 311 residues: Putative F-box protein At1g31090 (311 aa).

An F-box domain is found at 4-53 (GANSDSIPTDLIYEILSRLSVKPITRFRCVSKLWESIICRQDFTELFHNR). A disordered region spans residues 287–311 (RPAEQNTSTSSREDHLVRTVKRKRA).

The protein is Putative F-box protein At1g31090 of Arabidopsis thaliana (Mouse-ear cress).